Here is a 220-residue protein sequence, read N- to C-terminus: Uracil-DNA glycosylase (220 aa).

The active-site Proton acceptor is D65.

This sequence belongs to the uracil-DNA glycosylase (UDG) superfamily. UNG family.

It localises to the cytoplasm. The enzyme catalyses Hydrolyzes single-stranded DNA or mismatched double-stranded DNA and polynucleotides, releasing free uracil.. Its function is as follows. Excises uracil residues from the DNA which can arise as a result of misincorporation of dUMP residues by DNA polymerase or due to deamination of cytosine. The sequence is that of Uracil-DNA glycosylase from Leuconostoc mesenteroides subsp. mesenteroides (strain ATCC 8293 / DSM 20343 / BCRC 11652 / CCM 1803 / JCM 6124 / NCDO 523 / NBRC 100496 / NCIMB 8023 / NCTC 12954 / NRRL B-1118 / 37Y).